Consider the following 360-residue polypeptide: DNA replication and repair protein RecF (360 aa).

Position 30–37 (30–37 (GQNGSGKT)) interacts with ATP.

Belongs to the RecF family.

The protein localises to the cytoplasm. Its function is as follows. The RecF protein is involved in DNA metabolism; it is required for DNA replication and normal SOS inducibility. RecF binds preferentially to single-stranded, linear DNA. It also seems to bind ATP. The polypeptide is DNA replication and repair protein RecF (Shewanella sp. (strain W3-18-1)).